The primary structure comprises 966 residues: MSSFVNLESLISERGANCRGADEIVNNETTRILTSQIEHSQRSKKVNIRNKLSVAECDAFRARYGGAFDVNLTHEYTAPHSLAGALRVAEHYDCIDSFPPEDKIIDFGGSWLHHYSRGDSRVHSCCPILGPRDATRHEERMCRLRKMVQTSDRFVDVPDFCLNKAEDCNVQADWAICIHGGYDMGFQGLCKAMHAPLERGILQGTIMFDGAMLFDRQGELPLLQCRWQRVGTGSKEQIKFDFINESTLSYVHDWKNLGSFLTESTYSIGGTTYLLERMLLKCSIMTYKIIATNVRCPPESLRHCIWFENISQYLAVQIPIGYNLNDWKTVRVARATVREVEEISFRCFKENKDWTENMRSVASILSAKSSTVIINGQSIMSGERLDVLEYHLVAFSLTLNLYQKYEKLRNFQGELEWKGWANHFKTRLWWCGRTVSTEGGFLRNFLADKIPWLKLNTYADSLDFITKISEVESFEVDSVPTSRLRSFFQKEENIVERAASEIMSANARRIAKKAEMSKEFDDFVDAPEEFAPEDVVEEVINTPVTQDVKLRQSKPETARSIVLDPDAVLKNGAINEFADYSKRLHENTVSNLRHLWTLMGCRGNEIHNKSVAETYHRVDDMVNVHFPNGHWMYPLKYEYTVGYNDGGLGEKFENELYVVDKTCSCANAKAIADACKKVSAPTCSVVMVDGVAGCGKTTAIKETFRFEKDIIVTANRKSAEDVRKAIFGDASDSEVALKVVRTADSAIMHGLPECHRLLVDEAGLLHYGQLLAVADLCKCSEVLAFGDTEQISFKSRDATFRMKYCNIEYDKRDIVSKTFRCPQDVVSAVKILKRKCANRSSKYNGWVSSSKVEKSLSKSRIVSINQVSMEKHKFYLTMTEADKAALCSRAKDVGLDKTWVESNMETVHEAQGKAVDHVVLVRLKSTKCDLFKSEEYCLVALTRHKRTFEYLYNGDLGGDLISFYVT.

The segment at 49–381 (RNKLSVAECD…VIINGQSIMS (333 aa)) is methyltransferase. Residues 71–261 (NLTHEYTAPH…HDWKNLGSFL (191 aa)) form the Alphavirus-like MT domain. The 156-residue stretch at 660–815 (DKTCSCANAK…NIEYDKRDIV (156 aa)) folds into the (+)RNA virus helicase ATP-binding domain. Positions 687–951 (MVDGVAGCGK…TRHKRTFEYL (265 aa)) are ATP-dependent helicase. Residue 690 to 697 (GVAGCGKT) participates in ATP binding. Residues 816–966 (SKTFRCPQDV…GGDLISFYVT (151 aa)) form the (+)RNA virus helicase C-terminal domain.

The protein belongs to the bromoviridae replication protein 1a family.

Its subcellular location is the host endoplasmic reticulum membrane. Functionally, involved in the virus replication. Contains a helicase domain and a methyltransferase domain. The methyltransferase domain is probably involved in viral RNA capping. The protein is Replication protein 1a of Vicia faba (Broad bean).